We begin with the raw amino-acid sequence, 678 residues long: THO complex subunit 5 homolog A (678 aa).

2 disordered regions span residues 1–35 (MASDSLKKRKPKVNRNEDVKRGRHEDQEGRYYSEE) and 294–329 (ALFKPPEDSQDDESDSDAEEEQTTKRRRPTLGVQLD). Residues 7–10 (KKRK) carry the Nuclear localization signal motif. The segment covering 14 to 35 (NRNEDVKRGRHEDQEGRYYSEE) has biased composition (basic and acidic residues). A compositionally biased stretch (acidic residues) spans 301–314 (DSQDDESDSDAEEE).

It belongs to the THOC5 family. As to quaternary structure, component of the THO subcomplex, which is composed of thoc1, thoc2, thoc3, thoc5, thoc6 and thoc7. Component of the transcription/export (TREX) complex at least composed of alyref/thoc4, ddx39b, sarnp/cip29, chtop and the THO subcomplex. Interacts with thoc7.

It localises to the nucleus. The protein resides in the nucleus speckle. Its subcellular location is the cytoplasm. In terms of biological role, component of the THO subcomplex of the TREX complex which is thought to couple mRNA transcription, processing and nuclear export, and which specifically associates with spliced mRNA and not with unspliced pre-mRNA. Plays a key structural role in the oligomerization of the THO-ddx39b complex. TREX is recruited to spliced mRNAs by a transcription-independent mechanism, binds to mRNA upstream of the exon-junction complex (EJC) and is recruited in a splicing- and cap-dependent manner to a region near the 5' end of the mRNA where it functions in mRNA export to the cytoplasm via the TAP/NXF1 pathway. May be involved in cell differentiation. This Xenopus laevis (African clawed frog) protein is THO complex subunit 5 homolog A (thoc5-a).